Reading from the N-terminus, the 66-residue chain is Xenoxin-2 (66 aa).

4 cysteine pairs are disulfide-bonded: Cys3/Cys24, Cys17/Cys37, Cys43/Cys58, and Cys59/Cys64.

In terms of tissue distribution, expressed by the skin dorsal glands.

It is found in the secreted. Lacks alpha-neurotoxic activity, has apparently no antibacterial activity, nor anti-coagulant potency. The protein is Xenoxin-2 of Xenopus laevis (African clawed frog).